Reading from the N-terminus, the 869-residue chain is MTATPADRPDPGVAGDADWAAEARPLLVHADMRLCKRFDQGEPTERLLALRARAVDQLMRNAWARCIPADARLSLHAVGGYGRGELFPRSDVDLLVLGETAAQQRHEQALARLFALLWDVGLPISHAVRSPAQCTSAAADQTVLTALIESRPLVADAQARAALAAAIAPQQVWPPRAFFQAKREELHARHQRFGDTADNLEPDIKDGPGGLRDLQTLGWMALRAFGVKDLEALVGLGHVGMDEAAALRREREELARLRYGLHLVANRPEERLRFDYQKTLAERLGFADDPESLGVEKMMQRFYRSAALIRRISDRLLQRFEEQFDGEAVPVQLDAGFSLRRGYLTADADTWPDGDVVQVFALFAQWAAHREVRGLHSLTARALAEVLRDLPAYDVADAIARDRFMALLRGPRAVETLNRMARLGVLGQWIPAFASVSGRMQFDLFHVYTVDQHTLMVLRNIALFAAGRADERFSITHEVWPRLRKPELLLLAGLFHDIAKGRGGDHSELGAVDARAFCLAHRLSEGDTELVTWLVEQHLRMSVTAQKQDISDPEVIHRFATLVGTRERLDYLYLLTCADIAGTSPKLWNAWKDRLLADLYFAARRALREGLEHPPPREERLREARESARTLMQAQGHDDATIDRQFAGMPDENFLRFRPEQLAWQAASLIEVQIGQTLVKARRAVPDNDALEVFVYSPDRDGLFSAIVATLDRKGYGIHRARVLDAPHDAIFDVFEVLPQDSSADGDPQRLAAALRQVLAGDLLKVRPSRRAVPRQLRHFRFAPRVEFSESAGGRRTRISLVAPDRPGLLADVAHVLRMQHLRVHDARIATFGERAEDQFQITDEHDRPLPDAARQALRDALCACLDPT.

Positions 1 to 332 (MTATPADRPD…QFDGEAVPVQ (332 aa)) are uridylyltransferase. A uridylyl-removing region spans residues 333-691 (LDAGFSLRRG…RRAVPDNDAL (359 aa)). In terms of domain architecture, HD spans 450-572 (VDQHTLMVLR…VGTRERLDYL (123 aa)). 2 ACT domains span residues 692–771 (EVFV…PSRR) and 798–869 (RISL…LDPT).

Belongs to the GlnD family. Requires Mg(2+) as cofactor.

It catalyses the reaction [protein-PII]-L-tyrosine + UTP = [protein-PII]-uridylyl-L-tyrosine + diphosphate. It carries out the reaction [protein-PII]-uridylyl-L-tyrosine + H2O = [protein-PII]-L-tyrosine + UMP + H(+). Uridylyltransferase (UTase) activity is inhibited by glutamine, while glutamine activates uridylyl-removing (UR) activity. In terms of biological role, modifies, by uridylylation and deuridylylation, the PII regulatory proteins (GlnB and homologs), in response to the nitrogen status of the cell that GlnD senses through the glutamine level. Under low glutamine levels, catalyzes the conversion of the PII proteins and UTP to PII-UMP and PPi, while under higher glutamine levels, GlnD hydrolyzes PII-UMP to PII and UMP (deuridylylation). Thus, controls uridylylation state and activity of the PII proteins, and plays an important role in the regulation of nitrogen assimilation and metabolism. This is Bifunctional uridylyltransferase/uridylyl-removing enzyme from Xanthomonas campestris pv. campestris (strain B100).